A 119-amino-acid polypeptide reads, in one-letter code: Ribonuclease P protein component (119 aa).

This sequence belongs to the RnpA family. In terms of assembly, consists of a catalytic RNA component (M1 or rnpB) and a protein subunit.

The enzyme catalyses Endonucleolytic cleavage of RNA, removing 5'-extranucleotides from tRNA precursor.. RNaseP catalyzes the removal of the 5'-leader sequence from pre-tRNA to produce the mature 5'-terminus. It can also cleave other RNA substrates such as 4.5S RNA. The protein component plays an auxiliary but essential role in vivo by binding to the 5'-leader sequence and broadening the substrate specificity of the ribozyme. This Streptococcus mutans serotype c (strain ATCC 700610 / UA159) protein is Ribonuclease P protein component.